Consider the following 534-residue polypeptide: CTP synthase (534 aa).

The tract at residues 1–267 (MTKYIFVTGG…DQIVCDHLKL (267 aa)) is amidoligase domain. CTP is bound at residue serine 13. Position 13 (serine 13) interacts with UTP. 14-19 (SIGKGI) contributes to the ATP binding site. Tyrosine 54 is a binding site for L-glutamine. Aspartate 71 provides a ligand contact to ATP. Positions 71 and 141 each coordinate Mg(2+). CTP is bound by residues 148-150 (DIE), 188-193 (KTKPTQ), and lysine 224. Residues 188 to 193 (KTKPTQ) and lysine 224 contribute to the UTP site. 240 to 242 (RDV) is a binding site for ATP. Residues 292-534 (KIALVGKYVE…FVTAAIKNSN (243 aa)) form the Glutamine amidotransferase type-1 domain. Position 354 (glycine 354) interacts with L-glutamine. The active-site Nucleophile; for glutamine hydrolysis is cysteine 381. L-glutamine contacts are provided by residues 382–385 (LGMQ), glutamate 405, and arginine 463. Residues histidine 508 and glutamate 510 contribute to the active site.

Belongs to the CTP synthase family. Homotetramer.

The enzyme catalyses UTP + L-glutamine + ATP + H2O = CTP + L-glutamate + ADP + phosphate + 2 H(+). It catalyses the reaction L-glutamine + H2O = L-glutamate + NH4(+). It carries out the reaction UTP + NH4(+) + ATP = CTP + ADP + phosphate + 2 H(+). It functions in the pathway pyrimidine metabolism; CTP biosynthesis via de novo pathway; CTP from UDP: step 2/2. Its activity is regulated as follows. Allosterically activated by GTP, when glutamine is the substrate; GTP has no effect on the reaction when ammonia is the substrate. The allosteric effector GTP functions by stabilizing the protein conformation that binds the tetrahedral intermediate(s) formed during glutamine hydrolysis. Inhibited by the product CTP, via allosteric rather than competitive inhibition. In terms of biological role, catalyzes the ATP-dependent amination of UTP to CTP with either L-glutamine or ammonia as the source of nitrogen. Regulates intracellular CTP levels through interactions with the four ribonucleotide triphosphates. The polypeptide is CTP synthase (Streptococcus pyogenes serotype M2 (strain MGAS10270)).